The following is a 50-amino-acid chain: Cuticle protein CP498 (50 aa).

2 repeat units span residues 6 to 23 (ATVGESGIITPGGRLIQL) and 30 to 47 (ILEGPSAALLSNGDFVTY).

In terms of tissue distribution, calcified shell.

In Cancer pagurus (Rock crab), this protein is Cuticle protein CP498.